The following is a 355-amino-acid chain: Nematocyst expressed protein 3 (355 aa).

A signal peptide spans 1–18 (MKLTYILLIAVVGVAIEA). 3 ShKT domains span residues 50 to 89 (CKDVADDCKAFGKLEKDDENSCFNNPDKARNECPVSCKLC), 107 to 134 (QPQQCSQQSCYETPQWSVQNCAVTCQLC), and 140 to 182 (SGPV…CNTY). 6 disulfides stabilise this stretch: cysteine 50/cysteine 89, cysteine 57/cysteine 82, cysteine 71/cysteine 86, cysteine 116/cysteine 131, cysteine 149/cysteine 175, and cysteine 158/cysteine 179. Positions 92 to 355 (KRSKKQSDYM…KKSKSHKKQH (264 aa)) are excised as a propeptide. Residues 202-355 (YQPNAMPTPP…KKSKSHKKQH (154 aa)) are disordered. Positions 207–221 (MPTPPQGVTPAPLPP) are enriched in pro residues. 3 stretches are compositionally biased toward low complexity: residues 222–232 (YFQQQGYGYPQ), 240–270 (VQPGQTQAPTAAQSTPAPVQTTPASGKTTTE), and 277–332 (TEAA…AQSD). The segment covering 335–355 (NKKKHKKDKAQKKSKSHKKQH) has biased composition (basic residues).

This sequence belongs to the NEP3 family. As to expression, nematocytes. In late planulae, transcripts are found throughout the ectoderm in nematocytes, with high concentration of expressing cells in the oral pole. In primary polyps, is expressed in nematocytes in the body wall and physa ectoderm and in the upper and lower pharynx.

Its subcellular location is the nematocyst. It is found in the secreted. Functionally, neurotoxin. In vivo, induces pronounced contraction and tail twitching on zebrafish larvae, as well as death 5 hours later. The sequence is that of Nematocyst expressed protein 3 from Nematostella vectensis (Starlet sea anemone).